Reading from the N-terminus, the 474-residue chain is Pyruvate kinase (474 aa).

Arg37 lines the substrate pocket. K(+)-binding residues include Asn39, Ser41, and Asp71. 39–42 serves as a coordination point for ATP; sequence NFSH. ATP contacts are provided by Arg78 and Lys160. Glu222 serves as a coordination point for Mg(2+). Residues Gly245, Asp246, and Thr278 each contribute to the substrate site. Asp246 lines the Mg(2+) pocket.

Belongs to the pyruvate kinase family. In terms of assembly, homotetramer. Mg(2+) is required as a cofactor. Requires K(+) as cofactor.

It catalyses the reaction pyruvate + ATP = phosphoenolpyruvate + ADP + H(+). The protein operates within carbohydrate degradation; glycolysis; pyruvate from D-glyceraldehyde 3-phosphate: step 5/5. This is Pyruvate kinase (ttuE) from Agrobacterium vitis (Rhizobium vitis).